The sequence spans 154 residues: Small ribosomal subunit protein bS6 (154 aa).

Residues 97–154 (DSEPSAMMQKRDRDDRKDRERGRRRDDEGFGGGGGFGGDRGDRGDRGDRGERSFGGEG) are disordered. 2 stretches are compositionally biased toward basic and acidic residues: residues 105-124 (QKRD…RDDE) and 135-154 (DRGD…GGEG).

The protein belongs to the bacterial ribosomal protein bS6 family.

In terms of biological role, binds together with bS18 to 16S ribosomal RNA. This Methylobacterium radiotolerans (strain ATCC 27329 / DSM 1819 / JCM 2831 / NBRC 15690 / NCIMB 10815 / 0-1) protein is Small ribosomal subunit protein bS6.